We begin with the raw amino-acid sequence, 129 residues long: Small ribosomal subunit protein bS6 (129 aa).

The segment at 100–129 is disordered; sequence SIMLKQKEERAPRREERSEAKPEAKSEAAE. Basic and acidic residues predominate over residues 104–129; the sequence is KQKEERAPRREERSEAKPEAKSEAAE.

It belongs to the bacterial ribosomal protein bS6 family.

In terms of biological role, binds together with bS18 to 16S ribosomal RNA. The sequence is that of Small ribosomal subunit protein bS6 from Vibrio parahaemolyticus serotype O3:K6 (strain RIMD 2210633).